The sequence spans 141 residues: Large ribosomal subunit protein uL11 (141 aa).

The protein belongs to the universal ribosomal protein uL11 family. As to quaternary structure, part of the ribosomal stalk of the 50S ribosomal subunit. Interacts with L10 and the large rRNA to form the base of the stalk. L10 forms an elongated spine to which L12 dimers bind in a sequential fashion forming a multimeric L10(L12)X complex. One or more lysine residues are methylated.

Forms part of the ribosomal stalk which helps the ribosome interact with GTP-bound translation factors. In Clostridium kluyveri (strain ATCC 8527 / DSM 555 / NBRC 12016 / NCIMB 10680 / K1), this protein is Large ribosomal subunit protein uL11.